A 576-amino-acid polypeptide reads, in one-letter code: RING finger and SPRY domain-containing protein 1 (576 aa).

An N-terminal signal peptide occupies residues Met1–Gly16. Ser50 bears the Phosphoserine mark. Residues Ser50–Asn99 form a disordered region. Positions Asp57–Val68 are enriched in polar residues. A compositionally biased stretch (basic residues) spans Pro83 to Lys97. The B30.2/SPRY domain occupies Leu300 to Phe483. Asn314 is a glycosylation site (N-linked (GlcNAc...) asparagine). Residues Cys527–Arg562 form an RING-type zinc finger.

The protein localises to the secreted. The sequence is that of RING finger and SPRY domain-containing protein 1 (RSPRY1) from Macaca fascicularis (Crab-eating macaque).